Here is a 758-residue protein sequence, read N- to C-terminus: Maturase-like protein 2 (758 aa).

It localises to the plastid. Its subcellular location is the chloroplast. The chain is Maturase-like protein 2 (mat2) from Euglena gracilis.